A 509-amino-acid chain; its full sequence is Sperm-associated antigen 6 (509 aa).

8 ARM repeats span residues 31 to 70 (PQNI…RLAN), 73 to 112 (DDLA…AVGK), 115 to 154 (PQLA…YIAR), 157 to 196 (AELS…DIAK), 199 to 238 (PELA…QVSK), 241 to 280 (VDLA…EIAK), 325 to 365 (ENLA…QIGR), and 368 to 409 (PEHA…NILQ).

As to quaternary structure, interacts with SPAG16 and SPAG17. Highly expressed in testis.

The protein localises to the cytoplasm. It is found in the cytoskeleton. The protein resides in the cell projection. It localises to the cilium. Its subcellular location is the flagellum. The protein localises to the cilium axoneme. Its function is as follows. Important for structural integrity of the central apparatus in the sperm tail and for flagellar motility. In Homo sapiens (Human), this protein is Sperm-associated antigen 6 (SPAG6).